The chain runs to 25 residues: GIEKIISRSMFDQMLKHRNNPASFG.

It belongs to the glycosyl hydrolase 19 family. Chitinase class I subfamily. In terms of assembly, monomer.

Its subcellular location is the secreted. It is found in the extracellular space. The enzyme catalyses Random endo-hydrolysis of N-acetyl-beta-D-glucosaminide (1-&gt;4)-beta-linkages in chitin and chitodextrins.. It catalyses the reaction Hydrolysis of (1-&gt;4)-beta-linkages between N-acetylmuramic acid and N-acetyl-D-glucosamine residues in a peptidoglycan and between N-acetyl-D-glucosamine residues in chitodextrins.. In terms of biological role, bifunctional enzyme with lysozyme/chitinase activity. The protein is Bifunctional chitinase/lysozyme of Carica papaya (Papaya).